Consider the following 207-residue polypeptide: Guanylate kinase (207 aa).

The region spanning 5–184 (GNLFIVSAPS…ALADLSAIIR (180 aa)) is the Guanylate kinase-like domain. 12 to 19 (APSGAGKS) serves as a coordination point for ATP. Residues 30–49 (PSDKQVSVSHTTRKPRPGEV) are disordered.

This sequence belongs to the guanylate kinase family.

The protein localises to the cytoplasm. The catalysed reaction is GMP + ATP = GDP + ADP. Its function is as follows. Essential for recycling GMP and indirectly, cGMP. In Shewanella frigidimarina (strain NCIMB 400), this protein is Guanylate kinase.